A 253-amino-acid chain; its full sequence is Phosphoglycerate mutase 2 (253 aa).

Thr-3 bears the Phosphothreonine mark. Residues 10-17, 23-24, Arg-62, 89-92, Lys-100, and 116-117 each bind substrate; these read RHGESLWN, CG, ERHY, and RR. The active-site Tele-phosphohistidine intermediate is His-11. The residue at position 14 (Ser-14) is a Phosphoserine. Glu-89 (proton donor/acceptor) is an active-site residue. Phosphoserine is present on Ser-118. Residue Thr-121 is modified to Phosphothreonine. A phosphotyrosine mark is found at Tyr-132 and Tyr-133. Ser-135 carries the phosphoserine modification. Position 152 is a phosphothreonine (Thr-152). Substrate is bound at residue 187–188; that stretch reads GN.

It belongs to the phosphoglycerate mutase family. BPG-dependent PGAM subfamily. Homodimer. Interacts with ENO1. As to expression, expressed in the testes (at protein level).

It carries out the reaction (2R)-2-phosphoglycerate = (2R)-3-phosphoglycerate. It catalyses the reaction (2R)-3-phospho-glyceroyl phosphate = (2R)-2,3-bisphosphoglycerate + H(+). In terms of biological role, interconversion of 3- and 2-phosphoglycerate with 2,3-bisphosphoglycerate as the primer of the reaction. Can also catalyze the reaction of EC 5.4.2.4 (synthase), but with a reduced activity. The chain is Phosphoglycerate mutase 2 (Pgam2) from Mus musculus (Mouse).